A 201-amino-acid chain; its full sequence is Retinol-binding protein 4 (201 aa).

An N-terminal signal peptide occupies residues methionine 1–alanine 18. 3 cysteine pairs are disulfide-bonded: cysteine 22-cysteine 178, cysteine 88-cysteine 192, and cysteine 138-cysteine 147. Glutamine 116 contributes to the substrate binding site. Position 139 is an omega-N-methylarginine (arginine 139).

Belongs to the calycin superfamily. Lipocalin family. Interacts with TTR. Interaction with TTR prevents its loss by filtration through the kidney glomeruli. Interacts with STRA6. As to expression, detected in blood plasma and in urine (at protein level).

The protein resides in the secreted. In terms of biological role, retinol-binding protein that mediates retinol transport in blood plasma. Delivers retinol from the liver stores to the peripheral tissues. Transfers the bound all-trans retinol to STRA6, that then facilitates retinol transport across the cell membrane. This Homo sapiens (Human) protein is Retinol-binding protein 4 (RBP4).